A 559-amino-acid chain; its full sequence is Thermosome subunit alpha (559 aa).

The segment covering 535–547 (SEKKGGEGSKEES) has biased composition (basic and acidic residues). The segment at 535–559 (SEKKGGEGSKEESGGEGGSTPSLGD) is disordered.

Belongs to the TCP-1 chaperonin family. As to quaternary structure, forms a Heterooligomeric complex of two stacked eight-membered rings.

In terms of biological role, molecular chaperone; binds unfolded polypeptides in vitro, and has a weak ATPase activity. The polypeptide is Thermosome subunit alpha (thsA) (Saccharolobus solfataricus (strain ATCC 35092 / DSM 1617 / JCM 11322 / P2) (Sulfolobus solfataricus)).